The following is a 267-amino-acid chain: Thiamine thiazole synthase (267 aa).

Residues Ser41, 60 to 61, Gly68, Val132, and 160 to 162 each bind NAD(+); these read ER and HVD. Fe cation is bound by residues Asp162 and His177. An NAD(+)-binding site is contributed by Met227. Arg237 is a glycine binding site.

It belongs to the THI4 family. As to quaternary structure, homooctamer; tetramer of dimers. The cofactor is Fe(2+).

It carries out the reaction hydrogen sulfide + glycine + NAD(+) = ADP-5-ethyl-4-methylthiazole-2-carboxylate + nicotinamide + 3 H2O + H(+). It functions in the pathway cofactor biosynthesis; thiamine diphosphate biosynthesis. In terms of biological role, involved in the biosynthesis of the thiazole moiety of thiamine. Catalyzes the conversion of NAD and glycine to adenosine diphosphate 5-(2-hydroxyethyl)-4-methylthiazole-2-carboxylate (ADT), an adenylated thiazole intermediate, using free sulfide as a source of sulfur. This is Thiamine thiazole synthase from Saccharolobus islandicus (strain M.14.25 / Kamchatka #1) (Sulfolobus islandicus).